We begin with the raw amino-acid sequence, 913 residues long: Protein translocase subunit SecA (913 aa).

Residues glutamine 87, 105–109 (GEGKT), and aspartate 512 each bind ATP. Positions 897, 899, 908, and 909 each coordinate Zn(2+).

Belongs to the SecA family. Monomer and homodimer. Part of the essential Sec protein translocation apparatus which comprises SecA, SecYEG and auxiliary proteins SecDF-YajC and YidC. Zn(2+) is required as a cofactor.

It is found in the cell inner membrane. Its subcellular location is the cytoplasm. It catalyses the reaction ATP + H2O + cellular proteinSide 1 = ADP + phosphate + cellular proteinSide 2.. In terms of biological role, part of the Sec protein translocase complex. Interacts with the SecYEG preprotein conducting channel. Has a central role in coupling the hydrolysis of ATP to the transfer of proteins into and across the cell membrane, serving both as a receptor for the preprotein-SecB complex and as an ATP-driven molecular motor driving the stepwise translocation of polypeptide chains across the membrane. The protein is Protein translocase subunit SecA of Pseudomonas syringae pv. syringae (strain B728a).